A 314-amino-acid chain; its full sequence is Glucocorticoid receptor (314 aa).

The segment at 1–44 (ASAAVSAAPTEKEFPKTHSDVSSEQQNLKGQKGSNGGSMKLHTT) is disordered. Residues 1 to 281 (ASAAVSAAPT…SAATGPPPKL (281 aa)) are modulating. Residues 10 to 21 (TEKEFPKTHSDV) are compositionally biased toward basic and acidic residues. Residues Ser-65, Ser-73, and Ser-88 each carry the phosphoserine modification. A Glycyl lysine isopeptide (Lys-Gly) (interchain with G-Cter in SUMO2) cross-link involves residue Lys-120. Ser-129 carries the post-translational modification Phosphoserine. Residues Lys-139 and Lys-155 each participate in a glycyl lysine isopeptide (Lys-Gly) (interchain with G-Cter in SUMO); alternate cross-link. Glycyl lysine isopeptide (Lys-Gly) (interchain with G-Cter in SUMO2); alternate cross-links involve residues Lys-139 and Lys-155. A Phosphoserine modification is found at Ser-266. A Glycyl lysine isopeptide (Lys-Gly) (interchain with G-Cter in ubiquitin) cross-link involves residue Lys-280. An NR C4-type zinc finger spans residues 282-314 (CLVCSDEASGCHYGVLTCGSCKVFFKRAVEGQH). The segment at residues 282–314 (CLVCSDEASGCHYGVLTCGSCKVFFKRAVEGQH) is a DNA-binding region (nuclear receptor).

It belongs to the nuclear hormone receptor family. NR3 subfamily. As to quaternary structure, heteromultimeric cytoplasmic complex with HSP90AA1, HSPA1A/HSPA1B, and FKBP5 or another immunophilin such as PPID, STIP1, or the immunophilin homolog PPP5C. Upon ligand binding FKBP5 dissociates from the complex and FKBP4 takes its place, thereby linking the complex to dynein and mediating transport to the nucleus, where the complex dissociates. Probably forms a complex composed of chaperones HSP90 and HSP70, co-chaperones CDC37, PPP5C, TSC1 and client protein TSC2, CDK4, AKT, RAF1 and NR3C1; this complex does not contain co-chaperones STIP1/HOP and PTGES3/p23. Directly interacts with UNC45A. Binds to DNA as a homodimer, and as heterodimer with NR3C2 or the retinoid X receptor. Binds STAT5A and STAT5B homodimers and heterodimers. Interacts with NRIP1, POU2F1, POU2F2 and TRIM28. Interacts with several coactivator complexes, including the SMARCA4 complex, CREBBP/EP300, TADA2L (Ada complex) and p160 coactivators such as NCOA2 and NCOA6. Interaction with BAG1 inhibits transactivation. Interacts with HEXIM1 and TGFB1I1. Interacts with NCOA1. Interacts with NCOA3, SMARCA4, SMARCC1, SMARCD1, and SMARCE1. Interacts with CLOCK, CRY1 and CRY2 in a ligand-dependent fashion. Interacts with CIART. Interacts with RWDD3. Interacts with UBE2I/UBC9 and this interaction is enhanced in the presence of RWDD3. Interacts with GRIP1. Interacts with NR4A3 (via nuclear receptor DNA-binding domain), represses transcription activity of NR4A3 on the POMC promoter Nur response element (NurRE). Directly interacts with PNRC2 to attract and form a complex with UPF1 and DCP1A; the interaction leads to rapid mRNA degradation. Interacts with GSK3B. Interacts with FNIP1 and FNIP2. Interacts (via C-terminus) with HNRNPU (via C-terminus). Interacts with MCM3AP. Interacts (via domain NR LBD) with HSP90AA1 and HSP90AB1. In the absence of hormonal ligand, interacts with TACC1. Interacts (via NR LBD domain) with ZNF764 (via KRAB domain); the interaction regulates transcription factor activity of NR3C1 by directing its actions toward certain biologic pathways. Post-translationally, acetylation by CLOCK reduces its binding to glucocorticoid response elements and its transcriptional activity. In terms of processing, increased proteasome-mediated degradation in response to glucocorticoids. Phosphorylated in the absence of hormone; becomes hyperphosphorylated in the presence of glucocorticoid. The Ser-65, Ser-88 and Ser-266-phosphorylated forms are mainly cytoplasmic, and the Ser-73-phosphorylated form is nuclear. Phosphorylation at Ser-73 increases transcriptional activity. Phosphorylation at Ser-65, Ser-88 and Ser-266 decreases signaling capacity. Phosphorylation at Ser-266 may protect from glucocorticoid-induced apoptosis. Phosphorylation at Ser-65 and Ser-73 is not required in regulation of chromosome segregation. May be dephosphorylated by PPP5C, attenuates NR3C1 action. Post-translationally, ubiquitinated by UBR5, leading to its degradation: UBR5 specifically recognizes and binds ligand-bound NR3C1 when it is not associated with coactivators (NCOAs). In presence of NCOAs, the UBR5-degron is not accessible, preventing its ubiquitination and degradation. In terms of processing, sumoylation at Lys-139 and Lys-155 negatively regulates its transcriptional activity. Heat shock increases sumoylation in a RWDD3-dependent manner.

Its subcellular location is the cytoplasm. It localises to the nucleus. The protein localises to the mitochondrion. The protein resides in the cytoskeleton. It is found in the spindle. Its subcellular location is the microtubule organizing center. It localises to the centrosome. The protein localises to the chromosome. The protein resides in the nucleoplasm. Its function is as follows. Receptor for glucocorticoids (GC). Has a dual mode of action: as a transcription factor that binds to glucocorticoid response elements (GRE), both for nuclear and mitochondrial DNA, and as a modulator of other transcription factors. Affects inflammatory responses, cellular proliferation and differentiation in target tissues. Involved in chromatin remodeling. Plays a role in rapid mRNA degradation by binding to the 5' UTR of target mRNAs and interacting with PNRC2 in a ligand-dependent manner which recruits the RNA helicase UPF1 and the mRNA-decapping enzyme DCP1A, leading to RNA decay. Could act as a coactivator for STAT5-dependent transcription upon growth hormone (GH) stimulation and could reveal an essential role of hepatic GR in the control of body growth. Mediates glucocorticoid-induced apoptosis. Promotes accurate chromosome segregation during mitosis. May act as a tumor suppressor. May play a negative role in adipogenesis through the regulation of lipolytic and antilipogenic gene expression. The polypeptide is Glucocorticoid receptor (NR3C1) (Ovis aries (Sheep)).